The sequence spans 250 residues: 1-(5-phosphoribosyl)-5-[(5-phosphoribosylamino)methylideneamino] imidazole-4-carboxamide isomerase (250 aa).

Residue Asp-8 is the Proton acceptor of the active site. Asp-131 acts as the Proton donor in catalysis.

It belongs to the HisA/HisF family.

The protein resides in the cytoplasm. The enzyme catalyses 1-(5-phospho-beta-D-ribosyl)-5-[(5-phospho-beta-D-ribosylamino)methylideneamino]imidazole-4-carboxamide = 5-[(5-phospho-1-deoxy-D-ribulos-1-ylimino)methylamino]-1-(5-phospho-beta-D-ribosyl)imidazole-4-carboxamide. The protein operates within amino-acid biosynthesis; L-histidine biosynthesis; L-histidine from 5-phospho-alpha-D-ribose 1-diphosphate: step 4/9. The chain is 1-(5-phosphoribosyl)-5-[(5-phosphoribosylamino)methylideneamino] imidazole-4-carboxamide isomerase from Paraburkholderia phytofirmans (strain DSM 17436 / LMG 22146 / PsJN) (Burkholderia phytofirmans).